Here is a 350-residue protein sequence, read N- to C-terminus: 5'-tyrosyl-DNA phosphodiesterase (350 aa).

Positions 113–117 are interaction with 5' end of substrate DNA; that stretch reads NIDGL. Mg(2+)-binding residues include D115 and E145. The tract at residues 219-224 is interaction with 5' end of substrate DNA; that stretch reads HLESMR. The Proton donor/acceptor role is filled by D258. The interaction with 5' end of substrate DNA stretch occupies residues 260–262; that stretch reads NLR.

It belongs to the CCR4/nocturin family. TTRAP/TDP2 subfamily. Mg(2+) serves as cofactor. It depends on Mn(2+) as a cofactor.

It localises to the nucleus. Its subcellular location is the PML body. In terms of biological role, DNA repair enzyme that can remove a variety of covalent adducts from DNA through hydrolysis of a 5'-phosphodiester bond, giving rise to DNA with a free 5' phosphate. Catalyzes the hydrolysis of dead-end complexes between DNA and the topoisomerase 2 (top2) active site tyrosine residue. Hydrolyzes 5'-phosphoglycolates on protruding 5' ends on DNA double-strand breaks (DSBs) due to DNA damage by radiation and free radicals. This is 5'-tyrosyl-DNA phosphodiesterase from Caenorhabditis briggsae.